Consider the following 409-residue polypeptide: Peptidase T (409 aa).

Residue His79 participates in Zn(2+) binding. Asp81 is an active-site residue. Asp140 lines the Zn(2+) pocket. Glu174 functions as the Proton acceptor in the catalytic mechanism. Residues Glu175, Asp197, and His379 each contribute to the Zn(2+) site.

The protein belongs to the peptidase M20B family. Requires Zn(2+) as cofactor.

It is found in the cytoplasm. The catalysed reaction is Release of the N-terminal residue from a tripeptide.. Cleaves the N-terminal amino acid of tripeptides. The protein is Peptidase T of Lysinibacillus sphaericus (strain C3-41).